A 549-amino-acid polypeptide reads, in one-letter code: Frizzled-7-A (549 aa).

The first 22 residues, Met-1–Gln-22, serve as a signal peptide directing secretion. At Tyr-23 to Trp-231 the chain is on the extracellular side. Residues Pro-32 to Gln-151 enclose the FZ domain. Disulfide bonds link Cys-37–Cys-98, Cys-45–Cys-91, Cys-82–Cys-119, Cys-108–Cys-148, and Cys-112–Cys-136. Asn-51 carries N-linked (GlcNAc...) asparagine glycosylation. Residue Asn-152 is glycosylated (N-linked (GlcNAc...) asparagine). The chain crosses the membrane as a helical span at residues Val-232–Val-252. Residues Asp-253 to Pro-263 are Cytoplasmic-facing. A helical transmembrane segment spans residues Ile-264 to Leu-284. At Glu-285 to Cys-311 the chain is on the extracellular side. The helical transmembrane segment at Thr-312–Leu-332 threads the bilayer. At Ser-333 to Gln-354 the chain is on the cytoplasmic side. The helical transmembrane segment at Tyr-355–Gly-375 threads the bilayer. Topologically, residues Gln-376–Gly-398 are extracellular. Residues Phe-399–Phe-419 form a helical membrane-spanning segment. At Val-420 to Arg-445 the chain is on the cytoplasmic side. Residues Ile-446 to Tyr-466 traverse the membrane as a helical segment. The Extracellular portion of the chain corresponds to Glu-467–Thr-503. The chain crosses the membrane as a helical span at residues Val-504–Trp-524. Residues Ser-525–Val-549 are Cytoplasmic-facing. A Lys-Thr-X-X-X-Trp motif, mediates interaction with the PDZ domain of Dvl family members motif is present at residues Lys-527 to Trp-532. The short motif at Thr-547 to Val-549 is the PDZ-binding element.

It belongs to the G-protein coupled receptor Fz/Smo family. In terms of assembly, interacts with wnt11 and sdc4. The extracellular domain interacts with the extracellular domain of pcdh8/papc. Expressed in the animal region of cleavage stage embryos. During gastrulation, broadly expressed on the dorsal side of the embryo in deep mesodermal cells surrounding the blastopore lip and in presumptive anterior neuroectoderm. During neurulation, becomes progressively more restricted to the dorsal epidermis, neural plate, and neural tube. Expressed in the cranial neural crest of neurulae and tailbud embryos as well as the pronephros of tailbud embryos. Localized to the brain of neurulae, tailbud embryos and tadpoles. In tadpoles, strongly expressed in the eye and developing heart.

Its subcellular location is the cell membrane. It localises to the endosome membrane. Receptor for Wnt proteins. Acts in both canonical and non-canonical Wnt pathways. Although different papers report differing Wnt preferences, wnt5a, wnt8b and wnt11 have been proposed as synergists. In the canonical Wnt pathway, acts via beta-catenin to promote the expression of the dorsal genes siamois, twin and nodal3 and to establish the dorsal axis of the embryo and induce dorsal mesoderm formation. In a non-canonical Wnt/planar cell polarity (PCP) pathway, acts with sdc4 and dvl2/dsh to regulate convergent extension cell movements during gastrulation. Triggers phosphorylation of dvl2/dsh and its translocation to the plasma membrane. In a third branch of Wnt signaling, acts in a non-canonical pathway via trimeric G proteins, and independently of dvl2/dsh, to recruit protein kinase C (PKC) to the membrane and thus activate PKC. PKC signaling controls cell sorting and tissue separation during gastrulation. The polypeptide is Frizzled-7-A (fzd7-a) (Xenopus laevis (African clawed frog)).